The primary structure comprises 115 residues: Probable non-functional immunoglobulin heavy variable 8-51-1 (115 aa).

The first 17 residues, 1 to 17, serve as a signal peptide directing secretion; it reads MLVCVLLYSFRLFGIQG. The framework-1 stretch occupies residues 18–42; it reads EAQLTESGGDLVHLEGPLRLSCAAS. Positions 19–115 constitute an Ig-like domain; sequence AQLTESGGDL…QNMAAFNCAG (97 aa). Residues 43-50 form a complementarity-determining-1 region; the sequence is WFTFSIYE. Residues 51–67 form a framework-2 region; the sequence is IHWVCQASGKGLEWVAV. Residues cysteine 55 and cysteine 113 are joined by a disulfide bond. The tract at residues 68-75 is complementarity-determining-2; it reads IWRGESHQ. Positions 76–113 are framework-3; the sequence is YNADYVRGRLTTSRDNTKYMLYMQMISLRTQNMAAFNC. The segment at 114–115 is complementarity-determining-3; sequence AG.

In terms of assembly, immunoglobulins are composed of two identical heavy chains and two identical light chains; disulfide-linked.

The protein localises to the secreted. The protein resides in the cell membrane. Its function is as follows. Probable non-functional open reading frame (ORF) of V region of the variable domain of immunoglobulin heavy chains. Non-functional ORF generally cannot participate in the synthesis of a productive immunoglobulin chain due to altered V-(D)-J or switch recombination and/or splicing site (at mRNA level) and/or conserved amino acid change (protein level). Immunoglobulins, also known as antibodies, are membrane-bound or secreted glycoproteins produced by B lymphocytes. In the recognition phase of humoral immunity, the membrane-bound immunoglobulins serve as receptors which, upon binding of a specific antigen, trigger the clonal expansion and differentiation of B lymphocytes into immunoglobulins-secreting plasma cells. Secreted immunoglobulins mediate the effector phase of humoral immunity, which results in the elimination of bound antigens. The antigen binding site is formed by the variable domain of one heavy chain, together with that of its associated light chain. Thus, each immunoglobulin has two antigen binding sites with remarkable affinity for a particular antigen. The variable domains are assembled by a process called V-(D)-J rearrangement and can then be subjected to somatic hypermutations which, after exposure to antigen and selection, allow affinity maturation for a particular antigen. This Homo sapiens (Human) protein is Probable non-functional immunoglobulin heavy variable 8-51-1.